The sequence spans 482 residues: Aspartyl/glutamyl-tRNA(Asn/Gln) amidotransferase subunit B (482 aa).

The protein belongs to the GatB/GatE family. GatB subfamily. In terms of assembly, heterotrimer of A, B and C subunits.

It carries out the reaction L-glutamyl-tRNA(Gln) + L-glutamine + ATP + H2O = L-glutaminyl-tRNA(Gln) + L-glutamate + ADP + phosphate + H(+). It catalyses the reaction L-aspartyl-tRNA(Asn) + L-glutamine + ATP + H2O = L-asparaginyl-tRNA(Asn) + L-glutamate + ADP + phosphate + 2 H(+). Allows the formation of correctly charged Asn-tRNA(Asn) or Gln-tRNA(Gln) through the transamidation of misacylated Asp-tRNA(Asn) or Glu-tRNA(Gln) in organisms which lack either or both of asparaginyl-tRNA or glutaminyl-tRNA synthetases. The reaction takes place in the presence of glutamine and ATP through an activated phospho-Asp-tRNA(Asn) or phospho-Glu-tRNA(Gln). The chain is Aspartyl/glutamyl-tRNA(Asn/Gln) amidotransferase subunit B from Ehrlichia canis (strain Jake).